The sequence spans 563 residues: AP-1-like transcription factor yap1 (563 aa).

A disordered region spans residues 23-179; that stretch reads LAALSSNQPP…AFRERKEKHL (157 aa). The short motif at 35 to 42 is the Bipartite nuclear localization signal element; it reads QQNDKQRS. Residues 36–48 show a composition bias toward basic and acidic residues; the sequence is QNDKQRSQAKTDP. Over residues 52-67 the composition is skewed to low complexity; the sequence is PGNMSSGSFSMSPGFN. The Bipartite nuclear localization signal motif lies at 68–75; that stretch reads KTHPGSGG. Residues 79–94 show a composition bias toward acidic residues; it reads GDDESPFLDFNPELDF. Composition is skewed to basic and acidic residues over residues 112–144 and 170–179; these read SEEHEVGEKRKDMSDNENEESGKKRRESDDKAA and AFRERKEKHL. The bZIP domain maps to 154 to 217; that stretch reads SEPTSKRKAQ…ERLQVELREY (64 aa). The tract at residues 159 to 180 is basic motif; the sequence is KRKAQNRAAQRAFRERKEKHLK. Residues 182–189 are leucine-zipper; that stretch reads LETKVDEL. Residues 211-332 form a transcription activation 1 region; the sequence is QVELREYRKR…PSPKVPSVYN (122 aa). Disordered regions lie at residues 267–380 and 394–420; these read IFNG…KLND and DAVRGKSESVSNTPSQPNNNYEQTPGP. Residues 284 to 296 are n-CRD; the sequence is SSPATSDSQVPGV. The span at 300 to 309 shows a compositional bias: polar residues; that stretch reads ETLNGSNNRG. Residues 336–362 are compositionally biased toward low complexity; it reads SASSHDSSNSCSPSSSSDSHQSQMLSS. Polar residues-rich tracts occupy residues 363–380 and 401–416; these read NGTSPEPSSNSPATKLND and ESVSNTPSQPNNNYEQ. The transcription activation 2 stretch occupies residues 377–459; sequence KLNDSVQNHH…SQDFGTFFDD (83 aa). 3 disulfides stabilise this stretch: cysteine 510/cysteine 534, cysteine 510/cysteine 543, and cysteine 534/cysteine 543. The interval 510–543 is c-CRD; the sequence is CTKIWDRLQSMEKFRNGEIDVDNLCSELRTKARC. Residues 528–535 carry the Nuclear export signal motif; that stretch reads IDVDNLCS.

The protein belongs to the bZIP family. YAP subfamily. Depending on the oxidative stress inducing agent, yap1 can undergo two distinct conformational changes, both involving disulfide bond formation, and both masking the nuclear export signal, thus abolishing nuclear export.

The protein localises to the nucleus. Its subcellular location is the cytoplasm. In terms of biological role, transcription activator involved in oxidative stress response and redox homeostasis. Regulates the transcription of genes encoding antioxidant enzymes and components of the cellular thiol-reducing pathways. This Aspergillus oryzae (strain ATCC 42149 / RIB 40) (Yellow koji mold) protein is AP-1-like transcription factor yap1.